Reading from the N-terminus, the 450-residue chain is UPF0210 protein MK1214 (450 aa).

This sequence belongs to the UPF0210 family.

The chain is UPF0210 protein MK1214 from Methanopyrus kandleri (strain AV19 / DSM 6324 / JCM 9639 / NBRC 100938).